A 188-amino-acid polypeptide reads, in one-letter code: Probable manganese efflux pump MntP (188 aa).

6 helical membrane-spanning segments follow: residues 3–23 (YTAT…ASIG), 41–61 (LIFG…GILA), 66–86 (LEWN…RMII), 106–128 (WLLV…GLAF), 143–163 (ATLI…PMLG), and 168–188 (ILGG…HFHG).

Belongs to the MntP (TC 9.B.29) family.

The protein localises to the cell inner membrane. In terms of biological role, probably functions as a manganese efflux pump. This chain is Probable manganese efflux pump MntP, found in Salmonella heidelberg (strain SL476).